The chain runs to 127 residues: Multifunctional methyltransferase subunit trm112 (127 aa).

The 122-residue stretch at 2–123 (KVMTLNFLTC…KNGVANFLLP (122 aa)) folds into the TRM112 domain.

Belongs to the TRM112 family. Heterodimer of mtq2-rmt-1/trm112, forming the eRF1 methyltransferase. Rmt-1/trm112 is necessary for the solubility and activity of the catalytic subunit mtq2. Interacts with trm11; required for full tRNA methyltransferase activity. Interacts with bud23; required for full rRNA methyltransferase activity.

It localises to the cytoplasm. The protein resides in the nucleus. In terms of biological role, acts as an activator of both rRNA/tRNA and protein methyltransferases. Together with methyltransferase mtq2, required for the methylation of eRF1 on 'Gln-182'. Together with methyltransferase trm11, required for the formation of 2-methylguanosine at position 10 (m2G10) in tRNA. Together with methyltransferase bud23, required for the formation of a 7-methylguanine in 18S rRNA. Involved in biogenesis of both 40S and 60S ribosomal subunits. This is Multifunctional methyltransferase subunit trm112 (rmt-1) from Neurospora crassa (strain ATCC 24698 / 74-OR23-1A / CBS 708.71 / DSM 1257 / FGSC 987).